A 474-amino-acid polypeptide reads, in one-letter code: MKIIHTAIEFAPVIKAGGLGDALYGLAKALAANHTTEVVIPLYPKLFTLPKEQDLCSIQKLSYFFAGEQEATAFSYFYEGIKVTLFKLDTQPELFENAETIYTSDDAFRFCAFSAAAASYIQKEGANIVHLHDWHTGLVAGLLKQQPCSQLQKIVLTLHNFGYRGYTTREILEASSLNEFYISQYQLFRDPQTCVLLKGALYCSDFVTTVSPTYAKEILEDYSDYEIHDAITARQHHLRGILNGIDTTIWGPETDPNLAKNYTKELFETPSIFFEAKAKNKKALYEILGLSLEHSPCVCIISRIAEQKGPHFMKQAILHALENAYTLIIIGTCYGNQLHEEFANLQESLANSPNVRILLTYSDVLARQIFAAADMICIPSMFEPCGLTQMIGMRYGTVPLVRATGGLADTVANGINGFSFFNPHDFYEFRNMLSEAVTTYRTNHDKWQHIVRACLDFSSDLETAANKYLEIYKQ.

K15 is a binding site for ADP-alpha-D-glucose.

It belongs to the glycosyltransferase 1 family. Bacterial/plant glycogen synthase subfamily.

It catalyses the reaction [(1-&gt;4)-alpha-D-glucosyl](n) + ADP-alpha-D-glucose = [(1-&gt;4)-alpha-D-glucosyl](n+1) + ADP + H(+). It functions in the pathway glycan biosynthesis; glycogen biosynthesis. Its function is as follows. Synthesizes alpha-1,4-glucan chains using ADP-glucose. The protein is Glycogen synthase of Chlamydia trachomatis serovar A (strain ATCC VR-571B / DSM 19440 / HAR-13).